The primary structure comprises 360 residues: Phospho-N-acetylmuramoyl-pentapeptide-transferase (360 aa).

The next 10 helical transmembrane spans lie at 21 to 41 (YVTF…LWWG), 74 to 94 (MGGL…GDLG), 97 to 117 (YVWV…IDDY), 135 to 155 (LLQS…ADTA), 168 to 188 (VMPQ…VGSS), 199 to 219 (GLAI…AYLS), 236 to 256 (AGEL…FLWF), 263 to 283 (VFMG…IAVL), 288 to 308 (ILLV…ILQV), and 338 to 358 (VIVR…ATLK).

Belongs to the glycosyltransferase 4 family. MraY subfamily. Mg(2+) is required as a cofactor.

Its subcellular location is the cell inner membrane. The enzyme catalyses UDP-N-acetyl-alpha-D-muramoyl-L-alanyl-gamma-D-glutamyl-meso-2,6-diaminopimeloyl-D-alanyl-D-alanine + di-trans,octa-cis-undecaprenyl phosphate = di-trans,octa-cis-undecaprenyl diphospho-N-acetyl-alpha-D-muramoyl-L-alanyl-D-glutamyl-meso-2,6-diaminopimeloyl-D-alanyl-D-alanine + UMP. It participates in cell wall biogenesis; peptidoglycan biosynthesis. Functionally, catalyzes the initial step of the lipid cycle reactions in the biosynthesis of the cell wall peptidoglycan: transfers peptidoglycan precursor phospho-MurNAc-pentapeptide from UDP-MurNAc-pentapeptide onto the lipid carrier undecaprenyl phosphate, yielding undecaprenyl-pyrophosphoryl-MurNAc-pentapeptide, known as lipid I. The chain is Phospho-N-acetylmuramoyl-pentapeptide-transferase from Shewanella piezotolerans (strain WP3 / JCM 13877).